Reading from the N-terminus, the 388-residue chain is Norsolorinic acid reductase (388 aa).

The active-site Proton donor is Y74. Residue 233 to 243 participates in NADP(+) binding; the sequence is GVLGRGQFRSA.

The protein belongs to the aldo/keto reductase family. Aldo/keto reductase 2 subfamily.

It functions in the pathway mycotoxin biosynthesis; aflatoxin biosynthesis. The sequence is that of Norsolorinic acid reductase (norA) from Aspergillus flavus (strain ATCC 200026 / FGSC A1120 / IAM 13836 / NRRL 3357 / JCM 12722 / SRRC 167).